The following is a 592-amino-acid chain: NADH-quinone oxidoreductase subunit C/D (592 aa).

An NADH dehydrogenase I subunit C region spans residues 1-183 (MLTEFNSIPA…GPYILTEEKE (183 aa)). Residues 207-592 (DFMFLNLGPN…IDFVMADVDR (386 aa)) are NADH dehydrogenase I subunit D.

The protein in the N-terminal section; belongs to the complex I 30 kDa subunit family. It in the C-terminal section; belongs to the complex I 49 kDa subunit family. In terms of assembly, NDH-1 is composed of 13 different subunits. Subunits NuoB, CD, E, F, and G constitute the peripheral sector of the complex.

The protein localises to the cell inner membrane. The catalysed reaction is a quinone + NADH + 5 H(+)(in) = a quinol + NAD(+) + 4 H(+)(out). Functionally, NDH-1 shuttles electrons from NADH, via FMN and iron-sulfur (Fe-S) centers, to quinones in the respiratory chain. The immediate electron acceptor for the enzyme in this species is believed to be ubiquinone. Couples the redox reaction to proton translocation (for every two electrons transferred, four hydrogen ions are translocated across the cytoplasmic membrane), and thus conserves the redox energy in a proton gradient. This is NADH-quinone oxidoreductase subunit C/D from Acidiphilium cryptum (strain JF-5).